The primary structure comprises 990 residues: MSKSSTGRDERIGDFVIENEIGKGSFAVVHKGYRLQPREPVAIKIVIRKKLTPKLLDNLEGEIAILKAIHHPNIVELKECLKTEHQIYLVMAFCASGDLAQYIKKRFDIYERAGMAEPDSLTKGFKPTYPHPVDGGLNETIVRSILTQLAAALEFMRARDIVHRDIKPQNLLLQPPDAAFLALGNPREIPQMKVADFGFARHLSVNTLAETLCGSPLYMAPEILRFEKYDAKADLWSVGAVLFEMTVGKPPFRAANHVELLKRIERGEDKIKFPDERSAGSLAREAARRQELGEAPLPPPHPVSEDVKILIRQLLRQRPVSRMSFDDFFASPVISDFKAFIRPRAQPEAVERYEDLQRSERSVIIPSSGIKHVSVSSIEASTQQPGVQPPVSTATSPPALESRSTQEASPKAITGETIAPNKTPREDARPPRTLPRAFSAKYVTGEPPQPEDLEKRVPPTMTRTPSSPGIPEGSLLSGERDEAPQATTEHFGSSKGGEDSFLGKEYVLIEKQSVEVNALADELAASPQSRLGLASRRPSRLSRLSSGPLPSAPGASPPTAPPTILSSKPIRIANNTNTASTGAFALPPGSRPSSFPRRASLSSSGSPSTRQGGQVITNMDAVASTQSNRRDGNASSFPKDEVSVLGQRLAGFGLSGSGVGGGPSSALAKAISMASLRLFGVPSGVSLRDAAALVRTRAQRRGIARATDSLDEAEMTLLSTLEDLGQKAFVLSEFADSKLAHFFPDGPHQLSQELDSSTATSGISPSRNSVQGSARRVGSISSSSSSAVDPVAAEAASAEALMLYVRSLAFLQRAITLTKRHVESRSRPGVPAVTSAELNDVVQWLRARFNEVYDKADFARSRCSELPESAQQVDKLIFDKAVEVARAAATDELENNREGSGWDPSHCLLAYETANSMLSSLLDPGEDAMSLSEGSILMIDGYVKSINKRLWTLQEQFGGGVGAVGAAGASPVGVDAEARPGVSRSRTESP.

In terms of domain architecture, Protein kinase spans 15–334; it reads FVIENEIGKG…FDDFFASPVI (320 aa). Residues 21-29 and lysine 44 each bind ATP; that span reads IGKGSFAVV. The active-site Proton acceptor is the aspartate 165. Residues 375–408 show a composition bias toward polar residues; that stretch reads VSSIEASTQQPGVQPPVSTATSPPALESRSTQEA. Disordered regions lie at residues 375-499, 529-566, 579-614, 750-784, and 970-990; these read VSSI…GGED, SRLGLASRRPSRLSRLSSGPLPSAPGASPPTAPPTILS, ASTGAFALPPGSRPSSFPRRASLSSSGSPSTRQGGQ, LSQELDSSTATSGISPSRNSVQGSARRVGSISSSS, and SPVGVDAEARPGVSRSRTESP. Low complexity-rich tracts occupy residues 529-554 and 587-613; these read SRLGLASRRPSRLSRLSSGPLPSAPG and PPGSRPSSFPRRASLSSSGSPSTRQGG. Positions 750 to 771 are enriched in polar residues; the sequence is LSQELDSSTATSGISPSRNSVQ. A compositionally biased stretch (low complexity) spans 772–784; sequence GSARRVGSISSSS.

This sequence belongs to the protein kinase superfamily. Ser/Thr protein kinase family. APG1/unc-51/ULK1 subfamily. Homodimer. Forms a ternary complex with ATG13 and ATG17.

The protein resides in the cytoplasm. It is found in the preautophagosomal structure membrane. The catalysed reaction is L-seryl-[protein] + ATP = O-phospho-L-seryl-[protein] + ADP + H(+). It carries out the reaction L-threonyl-[protein] + ATP = O-phospho-L-threonyl-[protein] + ADP + H(+). Functionally, serine/threonine protein kinase involved in the cytoplasm to vacuole transport (Cvt) and found to be essential in autophagy, where it is required for the formation of autophagosomes. Involved in the clearance of protein aggregates which cannot be efficiently cleared by the proteasome. Required for selective autophagic degradation of the nucleus (nucleophagy) as well as for mitophagy which contributes to regulate mitochondrial quantity and quality by eliminating the mitochondria to a basal level to fulfill cellular energy requirements and preventing excess ROS production. Also involved in endoplasmic reticulum-specific autophagic process, in selective removal of ER-associated degradation (ERAD) substrates. Plays a key role in ATG9 and ATG23 cycling through the pre-autophagosomal structure and is necessary to promote ATG18 binding to ATG9 through phosphorylation of ATG9. Catalyzes phosphorylation of ATG4, decreasing the interaction between ATG4 and ATG8 and impairing deconjugation of PE-conjugated forms of ATG8. Required for wild-type budding of haploid sporidia and for complete symptom development during pathogenic growth such as gall formation and teliospore production in ears of mature maize. This chain is Serine/threonine-protein kinase ATG1, found in Mycosarcoma maydis (Corn smut fungus).